The sequence spans 821 residues: Serine/threonine-protein kinase CTR1 (821 aa).

Disordered stretches follow at residues 1 to 76 (MEMP…LNNQ) and 481 to 502 (NPGGENDALAENGGGSLPPSAN). Positions 14 to 25 (SQFSDDQVSVSV) are enriched in low complexity. The segment covering 35–49 (SLSSENRSNHNSGNT) has biased composition (polar residues). The 259-residue stretch at 551-809 (LNIKEKIGAG…TIMDLLRPLI (259 aa)) folds into the Protein kinase domain. ATP is bound by residues 557 to 565 (IGAGSFGTV) and lysine 578. The Proton acceptor role is filled by aspartate 676.

It belongs to the protein kinase superfamily. TKL Ser/Thr protein kinase family. RAF subfamily. Interacts with EIN2 (via C-terminus). Expressed in both seedlings and adult plants.

The enzyme catalyses L-seryl-[protein] + ATP = O-phospho-L-seryl-[protein] + ADP + H(+). It carries out the reaction L-threonyl-[protein] + ATP = O-phospho-L-threonyl-[protein] + ADP + H(+). Kinase activity is inhibited by C24:1-ceramide during hypoxia (e.g. submergences). Its function is as follows. Acts as a negative regulator in the ethylene response pathway. Phosphorylates the cytosolic C-terminal domain of EIN2, preventing the signaling in the absence of ethylene. Interacts with C24:1-ceramide upon hypoxic conditions (e.g. submergences) to in turn regulate EIN2 endoplasmic reticulum (ER)-to-nucleus translocation and EIN3 stabilization. The polypeptide is Serine/threonine-protein kinase CTR1 (Arabidopsis thaliana (Mouse-ear cress)).